Consider the following 543-residue polypeptide: CTP synthase (543 aa).

Residues 1–267 (MKQTKYIFVT…LSPIAEILDL (267 aa)) form an amidoligase domain region. S15 serves as a coordination point for CTP. S15 is a binding site for UTP. ATP is bound by residues 16–21 (SLGKGI) and D73. Mg(2+)-binding residues include D73 and E141. CTP-binding positions include 148 to 150 (DIE), 188 to 193 (KTKPTQ), and K224. UTP is bound by residues 188–193 (KTKPTQ) and K224. One can recognise a Glutamine amidotransferase type-1 domain in the interval 292-543 (KIAFVGKYVD…IKAAINYEDN (252 aa)). G354 contacts L-glutamine. Catalysis depends on C381, which acts as the Nucleophile; for glutamine hydrolysis. Residues 382-385 (LGMQ), E405, and R473 each bind L-glutamine. Residues H516 and E518 contribute to the active site.

This sequence belongs to the CTP synthase family. In terms of assembly, homotetramer.

It catalyses the reaction UTP + L-glutamine + ATP + H2O = CTP + L-glutamate + ADP + phosphate + 2 H(+). The enzyme catalyses L-glutamine + H2O = L-glutamate + NH4(+). The catalysed reaction is UTP + NH4(+) + ATP = CTP + ADP + phosphate + 2 H(+). It participates in pyrimidine metabolism; CTP biosynthesis via de novo pathway; CTP from UDP: step 2/2. With respect to regulation, allosterically activated by GTP, when glutamine is the substrate; GTP has no effect on the reaction when ammonia is the substrate. The allosteric effector GTP functions by stabilizing the protein conformation that binds the tetrahedral intermediate(s) formed during glutamine hydrolysis. Inhibited by the product CTP, via allosteric rather than competitive inhibition. In terms of biological role, catalyzes the ATP-dependent amination of UTP to CTP with either L-glutamine or ammonia as the source of nitrogen. Regulates intracellular CTP levels through interactions with the four ribonucleotide triphosphates. This chain is CTP synthase, found in Campylobacter jejuni subsp. jejuni serotype O:6 (strain 81116 / NCTC 11828).